A 175-amino-acid chain; its full sequence is Nucleoside diphosphate kinase 6 (175 aa).

Residues lysine 8, phenylalanine 57, arginine 85, threonine 91, arginine 105, and asparagine 115 each coordinate ATP. The active-site Pros-phosphohistidine intermediate is the histidine 118.

It belongs to the NDK family. Mg(2+) serves as cofactor.

The enzyme catalyses a 2'-deoxyribonucleoside 5'-diphosphate + ATP = a 2'-deoxyribonucleoside 5'-triphosphate + ADP. The catalysed reaction is a ribonucleoside 5'-diphosphate + ATP = a ribonucleoside 5'-triphosphate + ADP. In terms of biological role, major role in the synthesis of nucleoside triphosphates other than ATP. The ATP gamma phosphate is transferred to the NDP beta phosphate via a ping-pong mechanism, using a phosphorylated active-site intermediate. The protein is Nucleoside diphosphate kinase 6 (Nme6) of Rattus norvegicus (Rat).